Reading from the N-terminus, the 209-residue chain is Dof zinc finger protein DOF1.6 (209 aa).

Residues 1 to 17 (MPSEPNQTRPTRVQPST) show a composition bias toward polar residues. Positions 1–29 (MPSEPNQTRPTRVQPSTAAYPPPNLAEPL) are disordered. A compositionally biased stretch (pro residues) spans 20–29 (YPPPNLAEPL). The Dof-type zinc finger occupies 29-83 (LPCPRCNSTTTKFCYYNNYNLAQPRYYCKSCRRYWTQGGTLRDVPVGGGTRRSSS). Cys-31, Cys-34, Cys-56, and Cys-59 together coordinate Zn(2+). Residues 70 to 116 (RDVPVGGGTRRSSSKRHRSFSTTATSSSSSSSVITTTTQEPATTEAS) form a disordered region. Residues 89 to 116 (FSTTATSSSSSSSVITTTTQEPATTEAS) show a composition bias toward low complexity.

It is found in the nucleus. In terms of biological role, transcription factor that binds specifically to a 5'-AA[AG]G-3' consensus core sequence. The sequence is that of Dof zinc finger protein DOF1.6 (DOF1.6) from Arabidopsis thaliana (Mouse-ear cress).